Reading from the N-terminus, the 187-residue chain is uncharacterized protein (187 aa).

Positions 127–172 form a coiled coil; the sequence is KQPQVTLTQLQEELDEAKTRLALKEKELLEALSEISKLRLQLSNQL.

This is an uncharacterized protein from Tomato torrado virus (isolate Solanum lycopersicum/Spain/PRIToTV0301/-) (ToTV).